A 342-amino-acid chain; its full sequence is S-adenosylmethionine:tRNA ribosyltransferase-isomerase (342 aa).

The protein belongs to the QueA family. As to quaternary structure, monomer.

The protein resides in the cytoplasm. It catalyses the reaction 7-aminomethyl-7-carbaguanosine(34) in tRNA + S-adenosyl-L-methionine = epoxyqueuosine(34) in tRNA + adenine + L-methionine + 2 H(+). It functions in the pathway tRNA modification; tRNA-queuosine biosynthesis. Transfers and isomerizes the ribose moiety from AdoMet to the 7-aminomethyl group of 7-deazaguanine (preQ1-tRNA) to give epoxyqueuosine (oQ-tRNA). This is S-adenosylmethionine:tRNA ribosyltransferase-isomerase from Streptococcus agalactiae serotype III (strain NEM316).